Consider the following 534-residue polypeptide: CTP synthase (534 aa).

The tract at residues 1–266 (MKTKFLFITG…DERIIDYLNI (266 aa)) is amidoligase domain. Residue Ser-14 participates in CTP binding. Ser-14 provides a ligand contact to UTP. Residues 15-20 (SLGKGL) and Asp-72 contribute to the ATP site. Mg(2+) is bound by residues Asp-72 and Glu-140. CTP-binding positions include 147–149 (DIE), 187–192 (KTKPTQ), and Lys-223. UTP contacts are provided by residues 187-192 (KTKPTQ) and Lys-223. Position 239-241 (239-241 (RDV)) interacts with ATP. The Glutamine amidotransferase type-1 domain maps to 291–533 (TIAIVGKYVE…VGASLKHHGE (243 aa)). An L-glutamine-binding site is contributed by Gly-353. Catalysis depends on Cys-380, which acts as the Nucleophile; for glutamine hydrolysis. L-glutamine-binding positions include 381 to 384 (LGMQ), Glu-404, and Arg-461. Active-site residues include His-506 and Glu-508.

It belongs to the CTP synthase family. In terms of assembly, homotetramer.

It carries out the reaction UTP + L-glutamine + ATP + H2O = CTP + L-glutamate + ADP + phosphate + 2 H(+). It catalyses the reaction L-glutamine + H2O = L-glutamate + NH4(+). The catalysed reaction is UTP + NH4(+) + ATP = CTP + ADP + phosphate + 2 H(+). The protein operates within pyrimidine metabolism; CTP biosynthesis via de novo pathway; CTP from UDP: step 2/2. With respect to regulation, allosterically activated by GTP, when glutamine is the substrate; GTP has no effect on the reaction when ammonia is the substrate. The allosteric effector GTP functions by stabilizing the protein conformation that binds the tetrahedral intermediate(s) formed during glutamine hydrolysis. Inhibited by the product CTP, via allosteric rather than competitive inhibition. Its function is as follows. Catalyzes the ATP-dependent amination of UTP to CTP with either L-glutamine or ammonia as the source of nitrogen. Regulates intracellular CTP levels through interactions with the four ribonucleotide triphosphates. The polypeptide is CTP synthase (Syntrophotalea carbinolica (strain DSM 2380 / NBRC 103641 / GraBd1) (Pelobacter carbinolicus)).